We begin with the raw amino-acid sequence, 393 residues long: Squamosa promoter-binding-like protein 11 (393 aa).

A disordered region spans residues Gln-74–Pro-96. The segment at Val-172 to Pro-249 adopts an SBP-type zinc-finger fold. 8 residues coordinate Zn(2+): Cys-175, Cys-180, Cys-197, His-200, Cys-216, Cys-219, His-223, and Cys-235. A Bipartite nuclear localization signal motif is present at residues Lys-232–Lys-248.

The cofactor is Zn(2+).

Its subcellular location is the nucleus. In terms of biological role, trans-acting factor that binds specifically to the consensus nucleotide sequence 5'-TNCGTACAA-3'. This is Squamosa promoter-binding-like protein 11 (SPL11) from Arabidopsis thaliana (Mouse-ear cress).